Consider the following 596-residue polypeptide: UvrABC system protein C (596 aa).

In terms of domain architecture, GIY-YIG spans 14-91 (QQPGCYLMKD…IKKYDPRYNV (78 aa)). Positions 196–231 (KDIRKNLAGEMQKASEALNFERAKEIRDTIQHIDAT) constitute a UVR domain.

This sequence belongs to the UvrC family. Interacts with UvrB in an incision complex.

The protein resides in the cytoplasm. The UvrABC repair system catalyzes the recognition and processing of DNA lesions. UvrC both incises the 5' and 3' sides of the lesion. The N-terminal half is responsible for the 3' incision and the C-terminal half is responsible for the 5' incision. The chain is UvrABC system protein C from Oceanobacillus iheyensis (strain DSM 14371 / CIP 107618 / JCM 11309 / KCTC 3954 / HTE831).